Reading from the N-terminus, the 229-residue chain is 2,3-bisphosphoglycerate-dependent phosphoglycerate mutase (229 aa).

Substrate contacts are provided by residues 7–14 (RHGQSEWN), 20–21 (TG), Arg-59, 86–89 (ERHY), Lys-97, 113–114 (RR), and 182–183 (GN). The active-site Tele-phosphohistidine intermediate is His-8. The active-site Proton donor/acceptor is the Glu-86.

It belongs to the phosphoglycerate mutase family. BPG-dependent PGAM subfamily.

It catalyses the reaction (2R)-2-phosphoglycerate = (2R)-3-phosphoglycerate. The protein operates within carbohydrate degradation; glycolysis; pyruvate from D-glyceraldehyde 3-phosphate: step 3/5. Catalyzes the interconversion of 2-phosphoglycerate and 3-phosphoglycerate. In Listeria innocua serovar 6a (strain ATCC BAA-680 / CLIP 11262), this protein is 2,3-bisphosphoglycerate-dependent phosphoglycerate mutase.